We begin with the raw amino-acid sequence, 291 residues long: Bifunctional protein FolD (291 aa).

NADP(+) is bound by residues 166–168 (GAG), Ile191, and Ile232.

Belongs to the tetrahydrofolate dehydrogenase/cyclohydrolase family. As to quaternary structure, homodimer.

It carries out the reaction (6R)-5,10-methylene-5,6,7,8-tetrahydrofolate + NADP(+) = (6R)-5,10-methenyltetrahydrofolate + NADPH. The enzyme catalyses (6R)-5,10-methenyltetrahydrofolate + H2O = (6R)-10-formyltetrahydrofolate + H(+). It functions in the pathway one-carbon metabolism; tetrahydrofolate interconversion. In terms of biological role, catalyzes the oxidation of 5,10-methylenetetrahydrofolate to 5,10-methenyltetrahydrofolate and then the hydrolysis of 5,10-methenyltetrahydrofolate to 10-formyltetrahydrofolate. This is Bifunctional protein FolD from Aquifex aeolicus (strain VF5).